We begin with the raw amino-acid sequence, 229 residues long: Peptidase E (229 aa).

Active-site charge relay system residues include Ser120, Asp135, and His157.

This sequence belongs to the peptidase S51 family.

Its subcellular location is the cytoplasm. It carries out the reaction Dipeptidase E catalyzes the hydrolysis of dipeptides Asp-|-Xaa. It does not act on peptides with N-terminal Glu, Asn or Gln, nor does it cleave isoaspartyl peptides.. Hydrolyzes dipeptides containing N-terminal aspartate residues. May play a role in allowing the cell to use peptide aspartate to spare carbon otherwise required for the synthesis of the aspartate family of amino acids. This Citrobacter koseri (strain ATCC BAA-895 / CDC 4225-83 / SGSC4696) protein is Peptidase E.